The following is a 116-amino-acid chain: Protein Rev (116 aa).

2 positions are modified to phosphoserine; by host CK2: Ser5 and Ser8. Residues 18–26 form a homomultimerization region; it reads LIKFLYQSN. The interval 25–49 is disordered; the sequence is SNPPPSLEGTRQARRNRRRRWRERQ. Residues 34–50 carry the Nuclear localization signal and RNA-binding (RRE) motif; it reads TRQARRNRRRRWRERQR. The segment covering 36–47 has biased composition (basic residues); it reads QARRNRRRRWRE. A Nuclear export signal and binding to XPO1 motif is present at residues 73-84; it reads LPLPPLEKLTLD. Ser92 and Ser99 each carry phosphoserine; by host. The tract at residues 92–116 is disordered; that stretch reads SGTQGVGSPQILVESPAILEPGTKE.

The protein belongs to the HIV-1 REV protein family. Homomultimer; when bound to the RRE. Multimeric assembly is essential for activity and may involve XPO1. Binds to human KPNB1, XPO1, TNPO1, RANBP5 and IPO7. Interacts with the viral Integrase. Interacts with human KHDRBS1. Interacts with human NAP1; this interaction decreases Rev multimerization and stimulates its activity. Interacts with human DEAD-box helicases DDX3 and DDX24; these interactions may serve for viral RNA export to the cytoplasm and packaging, respectively. Interacts with human PSIP1; this interaction may inhibit HIV-1 DNA integration by promoting dissociation of the Integrase-LEDGF/p75 complex. Asymmetrically arginine dimethylated at one site by host PRMT6. Methylation impairs the RNA-binding activity and export of viral RNA from the nucleus to the cytoplasm. In terms of processing, phosphorylated by protein kinase CK2. Presence of, and maybe binding to the N-terminus of the regulatory beta subunit of CK2 is necessary for CK2-mediated Rev's phosphorylation.

It localises to the host nucleus. It is found in the host nucleolus. The protein localises to the host cytoplasm. Functionally, escorts unspliced or incompletely spliced viral pre-mRNAs (late transcripts) out of the nucleus of infected cells. These pre-mRNAs carry a recognition sequence called Rev responsive element (RRE) located in the env gene, that is not present in fully spliced viral mRNAs (early transcripts). This function is essential since most viral proteins are translated from unspliced or partially spliced pre-mRNAs which cannot exit the nucleus by the pathway used by fully processed cellular mRNAs. Rev itself is translated from a fully spliced mRNA that readily exits the nucleus. Rev's nuclear localization signal (NLS) binds directly to KPNB1/Importin beta-1 without previous binding to KPNA1/Importin alpha-1. KPNB1 binds to the GDP bound form of RAN (Ran-GDP) and targets Rev to the nucleus. In the nucleus, the conversion from Ran-GDP to Ran-GTP dissociates Rev from KPNB1 and allows Rev's binding to the RRE in viral pre-mRNAs. Rev multimerization on the RRE via cooperative assembly exposes its nuclear export signal (NES) to the surface. Rev can then form a complex with XPO1/CRM1 and Ran-GTP, leading to nuclear export of the complex. Conversion from Ran-GTP to Ran-GDP mediates dissociation of the Rev/RRE/XPO1/RAN complex, so that Rev can return to the nucleus for a subsequent round of export. Beside KPNB1, also seems to interact with TNPO1/Transportin-1, RANBP5/IPO5 and IPO7/RANBP7 for nuclear import. The nucleoporin-like HRB/RIP is an essential cofactor that probably indirectly interacts with Rev to release HIV RNAs from the perinuclear region to the cytoplasm. This Human immunodeficiency virus type 1 group M subtype B (strain 89.6) (HIV-1) protein is Protein Rev.